We begin with the raw amino-acid sequence, 372 residues long: tRNA-specific 2-thiouridylase MnmA (372 aa).

ATP-binding positions include G11–S18 and M36. The tract at residues N106 to D108 is interaction with target base in tRNA. The active-site Nucleophile is the C111. Cysteines 111 and 204 form a disulfide. G136 is an ATP binding site. The interval K154 to Q156 is interaction with tRNA. Residue C204 is the Cysteine persulfide intermediate of the active site. An interaction with tRNA region spans residues R311 to Y312.

The protein belongs to the MnmA/TRMU family.

It localises to the cytoplasm. It carries out the reaction S-sulfanyl-L-cysteinyl-[protein] + uridine(34) in tRNA + AH2 + ATP = 2-thiouridine(34) in tRNA + L-cysteinyl-[protein] + A + AMP + diphosphate + H(+). Catalyzes the 2-thiolation of uridine at the wobble position (U34) of tRNA, leading to the formation of s(2)U34. This chain is tRNA-specific 2-thiouridylase MnmA, found in Mycoplasmopsis synoviae (strain 53) (Mycoplasma synoviae).